The primary structure comprises 340 residues: Olfactory receptor 5T3 (340 aa).

Residues 1–55 (MDSTFTGYNLYNLQVKTEMDKLSSGLDIYRNPLKNKTEVTMFILTGFTDDFELQV) lie on the Extracellular side of the membrane. N-linked (GlcNAc...) asparagine glycosylation is present at N35. The chain crosses the membrane as a helical span at residues 56-76 (FLFLLFFAIYLFTLIGNLGLV). Residues 77-84 (VLVIEDSW) are Cytoplasmic-facing. The helical transmembrane segment at 85–105 (LHNPMYYFLSVLSFLDACYST) threads the bilayer. Residues 106–129 (VVTPKMLVNFLAKNKSISFIGCAT) are Extracellular-facing. Residue N119 is glycosylated (N-linked (GlcNAc...) asparagine). A disulfide bridge links C127 with C219. A helical membrane pass occupies residues 130–150 (QMLLFVTFGTTECFLLAAMAY). Residues 151 to 169 (DHYVAIYNPLLYSVSMSPR) are Cytoplasmic-facing. The chain crosses the membrane as a helical span at residues 170–190 (VYVPLITASYVAGILHATIHI). Topologically, residues 191 to 226 (VATFSLSFCGSNEIRHVFCDMPPLLAISCSDTHTNQ) are extracellular. A helical transmembrane segment spans residues 227 to 247 (LLLFYFVGSIEIVTILIVLIS). Over 248–267 (CDFILLSILKMHSAKGRQKA) the chain is Cytoplasmic. The helical transmembrane segment at 268-288 (FSTCGSHLTGVTIYHGTILVS) threads the bilayer. At 289 to 301 (YMRPSSSYASDHD) the chain is on the extracellular side. The chain crosses the membrane as a helical span at residues 302–322 (IIVSIFYTIVIPKLNPIIYSL). Residues 323–340 (RNKEVKKAVKKMLKLVYK) lie on the Cytoplasmic side of the membrane.

Belongs to the G-protein coupled receptor 1 family.

It localises to the cell membrane. In terms of biological role, odorant receptor. This is Olfactory receptor 5T3 (OR5T3) from Homo sapiens (Human).